A 59-amino-acid polypeptide reads, in one-letter code: UPF0434 protein GOX0764 (59 aa).

Belongs to the UPF0434 family.

The polypeptide is UPF0434 protein GOX0764 (Gluconobacter oxydans (strain 621H) (Gluconobacter suboxydans)).